Reading from the N-terminus, the 324-residue chain is Probable cell division protein WhiA (324 aa).

Residues 275-308 constitute a DNA-binding region (H-T-H motif); that stretch reads SLEELGALADPPLTKDAIAGRIRRLIAMADRRAD.

This sequence belongs to the WhiA family.

Functionally, involved in cell division and chromosome segregation. This chain is Probable cell division protein WhiA, found in Acidothermus cellulolyticus (strain ATCC 43068 / DSM 8971 / 11B).